Reading from the N-terminus, the 279-residue chain is Bifunctional protein FolD (279 aa).

Residues 159 to 161, Ser184, and Thr225 each bind NADP(+); that span reads GRS.

The protein belongs to the tetrahydrofolate dehydrogenase/cyclohydrolase family. Homodimer.

It catalyses the reaction (6R)-5,10-methylene-5,6,7,8-tetrahydrofolate + NADP(+) = (6R)-5,10-methenyltetrahydrofolate + NADPH. It carries out the reaction (6R)-5,10-methenyltetrahydrofolate + H2O = (6R)-10-formyltetrahydrofolate + H(+). The protein operates within one-carbon metabolism; tetrahydrofolate interconversion. In terms of biological role, catalyzes the oxidation of 5,10-methylenetetrahydrofolate to 5,10-methenyltetrahydrofolate and then the hydrolysis of 5,10-methenyltetrahydrofolate to 10-formyltetrahydrofolate. This is Bifunctional protein FolD from Methanospirillum hungatei JF-1 (strain ATCC 27890 / DSM 864 / NBRC 100397 / JF-1).